Here is a 568-residue protein sequence, read N- to C-terminus: Urease subunit alpha (568 aa).

In terms of domain architecture, Urease spans 131–568; that stretch reads GGMDAHIHFI…LPLAQRYFLY (438 aa). Ni(2+) contacts are provided by His136, His138, and Lys219. The residue at position 219 (Lys219) is an N6-carboxylysine. Residue His221 participates in substrate binding. His248 and His274 together coordinate Ni(2+). His322 serves as the catalytic Proton donor. Position 362 (Asp362) interacts with Ni(2+).

This sequence belongs to the metallo-dependent hydrolases superfamily. Urease alpha subunit family. In terms of assembly, heterotrimer of UreA (gamma), UreB (beta) and UreC (alpha) subunits. Three heterotrimers associate to form the active enzyme. The cofactor is Ni cation. Post-translationally, carboxylation allows a single lysine to coordinate two nickel ions.

The protein resides in the cytoplasm. The enzyme catalyses urea + 2 H2O + H(+) = hydrogencarbonate + 2 NH4(+). The protein operates within nitrogen metabolism; urea degradation; CO(2) and NH(3) from urea (urease route): step 1/1. This is Urease subunit alpha from Cereibacter sphaeroides (strain ATCC 17025 / ATH 2.4.3) (Rhodobacter sphaeroides).